The primary structure comprises 511 residues: Ribonuclease E/G-like protein (511 aa).

In terms of domain architecture, S1 motif spans 35 to 117 (SDIYLGTVDK…LTANITLSGR (83 aa)). The Mg(2+) site is built by Asp-296 and Asp-339.

The protein belongs to the RNase E/G family. Mg(2+) serves as cofactor.

The protein localises to the plastid. Its subcellular location is the chloroplast stroma. Its function is as follows. Involved in intercistronic processing of primary transcripts from chloroplast operons. The endonucleolytic activity of the enzyme depends on the number of phosphates at the 5' end, is inhibited by structured RNA, and preferentially cleaves A/U-rich sequences. The chain is Ribonuclease E/G-like protein (rne) from Porphyra purpurea (Red seaweed).